A 356-amino-acid chain; its full sequence is Competence protein ComGA (356 aa).

Residue 144 to 151 coordinates ATP; the sequence is GPTGSGKT.

Belongs to the GSP E family.

It is found in the cell membrane. Functionally, required for uptake of DNA by competent cells. In Bacillus subtilis (strain 168), this protein is Competence protein ComGA (comGA).